Reading from the N-terminus, the 354-residue chain is Kelch domain-containing protein 8B (354 aa).

8 Kelch repeats span residues 1-31 (MAAG…HQDG), 32-79 (HLLV…VLGK), 81-127 (VLVV…ERDG), 128-175 (MVYA…LHGN), 176-222 (KIYV…MAEG), 224-281 (VFSL…SLGG), 282-329 (NIVA…QAGP), and 331-354 (LFVI…RDGV).

It localises to the cytoplasm. It is found in the midbody. In terms of biological role, involved in pinching off the separated nuclei at the cleavage furrow and in cytokinesis. Required for mitotic integrity and maintenance of chromosomal stability. Protects cells against mitotic errors, centrosomal amplification, micronucleus formation and aneuploidy. Plays a key role of midbody function involving abscission of the daughter cells during cytokinesis and appropriate chromosomal and nuclear segregation into the daughter cells. This Rattus norvegicus (Rat) protein is Kelch domain-containing protein 8B (Klhdc8b).